A 512-amino-acid chain; its full sequence is Serine--tRNA ligase, cytoplasmic (512 aa).

N-acetylmethionine is present on Met1. The interval 9-61 (RVDKGGDPALIRETQEKRFKDPGLVDQLVKADSEWRRCRFRADNLNKLKNLCS) is interaction with tRNA. Ser241 carries the phosphoserine modification. Positions 271 and 302 each coordinate L-serine. Residues 302–304 (RQE) and 318–321 (VHQF) contribute to the ATP site. Lys323 carries the post-translational modification N6-acetyllysine. Residue Glu325 participates in L-serine binding. Residue 391-394 (ELVS) coordinates ATP. Asn427 contributes to the L-serine binding site. Residues 470–512 (FVKPAPIDQEPSKKQKKQHEGSKKKAKEVPLENQLQSMEVTEA) are disordered. A compositionally biased stretch (basic and acidic residues) spans 479 to 499 (EPSKKQKKQHEGSKKKAKEVP). The Nuclear localization signal signature appears at 482–494 (KKQKKQHEGSKKK). Over residues 502 to 512 (NQLQSMEVTEA) the composition is skewed to polar residues. Ser506 bears the Phosphoserine mark.

Belongs to the class-II aminoacyl-tRNA synthetase family. Type-1 seryl-tRNA synthetase subfamily. As to quaternary structure, homodimer. The tRNA molecule may bind across the dimer. Interacts with SIRT2. Interacts with METTL6; interaction is required for the tRNA N(3)-methylcytidine methyltransferase activity of METTL6.

The protein localises to the cytoplasm. Its subcellular location is the nucleus. The catalysed reaction is tRNA(Ser) + L-serine + ATP = L-seryl-tRNA(Ser) + AMP + diphosphate + H(+). It catalyses the reaction tRNA(Sec) + L-serine + ATP = L-seryl-tRNA(Sec) + AMP + diphosphate + H(+). The protein operates within aminoacyl-tRNA biosynthesis; selenocysteinyl-tRNA(Sec) biosynthesis; L-seryl-tRNA(Sec) from L-serine and tRNA(Sec): step 1/1. Functionally, catalyzes the attachment of serine to tRNA(Ser) in a two-step reaction: serine is first activated by ATP to form Ser-AMP and then transferred to the acceptor end of tRNA(Ser). Is probably also able to aminoacylate tRNA(Sec) with serine, to form the misacylated tRNA L-seryl-tRNA(Sec), which will be further converted into selenocysteinyl-tRNA(Sec). In the nucleus, binds to the VEGFA core promoter and prevents MYC binding and transcriptional activation by MYC. Recruits SIRT2 to the VEGFA promoter, promoting deacetylation of histone H4 at 'Lys-16' (H4K16). Thereby, inhibits the production of VEGFA and sprouting angiogenesis mediated by VEGFA. This chain is Serine--tRNA ligase, cytoplasmic (Sars1), found in Mus musculus (Mouse).